A 449-amino-acid polypeptide reads, in one-letter code: MFGDLMVFKAYDIRGIYGRELDENFAYSLGKCIGKKFENKKILVGNDVRIGSKELLPYFIVGLKEYADVFYAGTISTPLMYFGTKGKYDLGVILTASHNPPEYTGFKMCDKEAIPLSPIEEIKPIFKKYELTESIKEEAKNLNLDDLKVNIIEEYKKFFLKRCKASDKKIAVDFANGATTIAEKEILNELFDNAVFINDYPDGNFPAHQPDTLKMECLKDIIRAVKKNNCELGLIFDGDGDRLGIVDENGNVLRGDILTAIIAKEILKEKSNAKIVYDLRCSKIVPEIIEKYGGIAIKSRVGHYFIKKLMHEIDAEFAGELSNHFYFKEIGYFESPLLALNYILKAMDEENKSLSELNKEFSKYPHSGEINFRVKDQKYIMEKIKEHFKDCKLEELDGISIYCKNFWFNLRPSNTEPLLRLNLEADDEKTMKEKVEEIKNLIAKLDASL.

The active-site Phosphoserine intermediate is the Ser-97. 4 residues coordinate Mg(2+): Ser-97, Asp-237, Asp-239, and Asp-241.

The protein belongs to the phosphohexose mutase family. Requires Mg(2+) as cofactor.

The catalysed reaction is alpha-D-mannose 1-phosphate = D-mannose 6-phosphate. The protein operates within amino-acid biosynthesis. Its function is as follows. Catalyzes the formation of mannose-1-P from mannose-6-P. Can also use glucose-6-P. This chain is Phosphomannomutase (manB), found in Methanocaldococcus jannaschii (strain ATCC 43067 / DSM 2661 / JAL-1 / JCM 10045 / NBRC 100440) (Methanococcus jannaschii).